We begin with the raw amino-acid sequence, 510 residues long: Metalloprotease TIKI homolog (510 aa).

The first 30 residues, 1 to 30, serve as a signal peptide directing secretion; sequence MQVKIVQVFPCLVLLVKLVLLSVLLPSATG. Over 31-489 the chain is Extracellular; sequence SYHCSNNATQ…FIPSASSGLR (459 aa). 9 N-linked (GlcNAc...) asparagine glycosylation sites follow: Asn-37, Asn-98, Asn-108, Asn-141, Asn-223, Asn-281, Asn-322, Asn-383, and Asn-417. Over residues 435 to 471 the composition is skewed to low complexity; that stretch reads TSLNSATASTTVATPTSSVTPPTSSSSQTRSLTISDS. The disordered stretch occupies residues 435-477; the sequence is TSLNSATASTTVATPTSSVTPPTSSSSQTRSLTISDSQRTSDD. Residues 490–510 form a helical membrane-spanning segment; that stretch reads YNIGLVCVTLFFVLLIITSAL.

Belongs to the TIKI family. It depends on Mn(2+) as a cofactor. Co(2+) serves as cofactor.

The protein resides in the membrane. Functionally, metalloprotease. The protein is Metalloprotease TIKI homolog of Amphimedon queenslandica (Sponge).